Here is a 408-residue protein sequence, read N- to C-terminus: Peptidase T (408 aa).

A Zn(2+)-binding site is contributed by His-78. Asp-80 is a catalytic residue. Residue Asp-141 coordinates Zn(2+). Glu-175 (proton acceptor) is an active-site residue. Zn(2+)-binding residues include Glu-176, Asp-198, and His-380.

This sequence belongs to the peptidase M20B family. Zn(2+) serves as cofactor.

It is found in the cytoplasm. It catalyses the reaction Release of the N-terminal residue from a tripeptide.. Its function is as follows. Cleaves the N-terminal amino acid of tripeptides. The sequence is that of Peptidase T from Halothermothrix orenii (strain H 168 / OCM 544 / DSM 9562).